Consider the following 218-residue polypeptide: Cytochrome b6 (218 aa).

The helical transmembrane segment at 35 to 55 threads the bilayer; sequence IFYCLGGITLVCFLIQFATGF. C38 contacts heme c. Heme b is bound by residues H89 and H103. Helical transmembrane passes span 93–113, 119–139, and 189–209; these read ASMM…TGGF, LTWV…VTGY, and LHTF…FLMI. 2 residues coordinate heme b: H190 and H205.

Belongs to the cytochrome b family. PetB subfamily. As to quaternary structure, the 4 large subunits of the cytochrome b6-f complex are cytochrome b6, subunit IV (17 kDa polypeptide, PetD), cytochrome f and the Rieske protein, while the 4 small subunits are PetG, PetL, PetM and PetN. The complex functions as a dimer. Heme b serves as cofactor. It depends on heme c as a cofactor.

It localises to the cellular thylakoid membrane. Functionally, component of the cytochrome b6-f complex, which mediates electron transfer between photosystem II (PSII) and photosystem I (PSI), cyclic electron flow around PSI, and state transitions. This Prochlorococcus marinus (strain MIT 9515) protein is Cytochrome b6.